The sequence spans 290 residues: Protein-lysine methyltransferase METTL21E (290 aa).

Residues tryptophan 96, 124–126, aspartate 145, tryptophan 176, and alanine 197 contribute to the S-adenosyl-L-methionine site; that span reads GAG.

The protein belongs to the methyltransferase superfamily. METTL21 family.

Its function is as follows. Protein-lysine methyltransferase. This is Protein-lysine methyltransferase METTL21E (METTL21E) from Bos taurus (Bovine).